The sequence spans 262 residues: Tryptophan synthase alpha chain (262 aa).

Residues glutamate 48 and aspartate 59 each act as proton acceptor in the active site.

The protein belongs to the TrpA family. In terms of assembly, tetramer of two alpha and two beta chains.

It carries out the reaction (1S,2R)-1-C-(indol-3-yl)glycerol 3-phosphate + L-serine = D-glyceraldehyde 3-phosphate + L-tryptophan + H2O. It participates in amino-acid biosynthesis; L-tryptophan biosynthesis; L-tryptophan from chorismate: step 5/5. The alpha subunit is responsible for the aldol cleavage of indoleglycerol phosphate to indole and glyceraldehyde 3-phosphate. The chain is Tryptophan synthase alpha chain from Helicobacter pylori (strain HPAG1).